A 355-amino-acid chain; its full sequence is S-adenosylmethionine:tRNA ribosyltransferase-isomerase (355 aa).

This sequence belongs to the QueA family. Monomer.

Its subcellular location is the cytoplasm. The enzyme catalyses 7-aminomethyl-7-carbaguanosine(34) in tRNA + S-adenosyl-L-methionine = epoxyqueuosine(34) in tRNA + adenine + L-methionine + 2 H(+). Its pathway is tRNA modification; tRNA-queuosine biosynthesis. Its function is as follows. Transfers and isomerizes the ribose moiety from AdoMet to the 7-aminomethyl group of 7-deazaguanine (preQ1-tRNA) to give epoxyqueuosine (oQ-tRNA). This Burkholderia lata (strain ATCC 17760 / DSM 23089 / LMG 22485 / NCIMB 9086 / R18194 / 383) protein is S-adenosylmethionine:tRNA ribosyltransferase-isomerase.